The primary structure comprises 86 residues: Small ribosomal subunit protein eS21 (86 aa).

This sequence belongs to the eukaryotic ribosomal protein eS21 family. In terms of assembly, component of the 40S small ribosomal subunit.

The protein localises to the cytoplasm. Its subcellular location is the cytosol. It is found in the rough endoplasmic reticulum. This is Small ribosomal subunit protein eS21 (RPS21) from Suberites domuncula (Sponge).